A 150-amino-acid chain; its full sequence is Troponin C, isoform 2B (150 aa).

Methionine 1 carries the post-translational modification N-acetylmethionine. 4 consecutive EF-hand domains span residues 7–42, 43–78, 83–118, and 119–150; these read EQLS…MGVK, ISEK…FLIE, ALKA…LDNR, and LTEE…MMNG. The Ca(2+) site is built by aspartate 56, aspartate 58, serine 60, glutamate 62, and glutamate 67. Ca(2+) is bound by residues aspartate 132, aspartate 134, serine 136, threonine 138, and glutamate 143.

Belongs to the troponin C family.

Troponin is the central regulatory protein of striated muscle contraction. Tn consists of three components: Tn-I which is the inhibitor of actomyosin ATPase, Tn-T which contains the binding site for tropomyosin and Tn-C. The binding of calcium to Tn-C abolishes the inhibitory action of Tn on actin filaments. The sequence is that of Troponin C, isoform 2B from Homarus americanus (American lobster).